Reading from the N-terminus, the 161-residue chain is Tropomyosin (161 aa).

The stretch at 1 to 161 (MDKLREKINA…DEVHQALEDL (161 aa)) forms a coiled coil. A compositionally biased stretch (basic and acidic residues) spans 40 to 52 (EQEYESLSRKSEA). Disordered regions lie at residues 40–65 (EQEY…EETK) and 107–134 (EKMR…DDME).

In terms of assembly, homodimer.

Its subcellular location is the cytoplasm. The protein localises to the cytoskeleton. In terms of biological role, forms part of the F-actin contractile ring during cytokinesis. The sequence is that of Tropomyosin (cdc8) from Schizosaccharomyces pombe (strain 972 / ATCC 24843) (Fission yeast).